Consider the following 509-residue polypeptide: Maturase K (509 aa).

The protein belongs to the intron maturase 2 family. MatK subfamily.

The protein localises to the plastid. Its subcellular location is the chloroplast. Its function is as follows. Usually encoded in the trnK tRNA gene intron. Probably assists in splicing its own and other chloroplast group II introns. This is Maturase K from Clematis florida (Asian virgin's bower).